The sequence spans 239 residues: Cysteine-rich venom protein (239 aa).

Positions 1 to 18 are cleaved as a signal peptide; it reads MIVFILLSLAAVLQQSVA. The region spanning 37 to 165 is the SCP domain; it reads VDMHNSFRRS…PYNYFYVCQY (129 aa). Disulfide bonds link cysteine 74/cysteine 152, cysteine 91/cysteine 166, cysteine 147/cysteine 163, cysteine 185/cysteine 192, cysteine 188/cysteine 197, cysteine 210/cysteine 228, and cysteine 219/cysteine 232. Positions 201-234 constitute a ShKT domain; that stretch reads CPINNVFTNCDSLLQQSSCEDSYITTNCGASCFC.

It belongs to the CRISP family. Expressed by the venom gland.

It is found in the secreted. Blocks contraction of smooth muscle elicited by high potassium-induced depolarization, but does not block caffeine-stimulated contraction. May target voltage-gated calcium channels on smooth muscle. The protein is Cysteine-rich venom protein of Cerberus rynchops (Dog-faced water snake).